A 122-amino-acid polypeptide reads, in one-letter code: MIQTETMLDVADNSGARRVQCIKVLGGSHRRYASVGDIIKVTVKEAIPRARVKKGDVMNAVVVRTKFGIRRPDGSVIRFDDNAAVILNNNKAPIATRIFGPVTRELRTEQFMKIISLAPEVL.

It belongs to the universal ribosomal protein uL14 family. As to quaternary structure, part of the 50S ribosomal subunit. Forms a cluster with proteins L3 and L19. In the 70S ribosome, L14 and L19 interact and together make contacts with the 16S rRNA in bridges B5 and B8.

Its function is as follows. Binds to 23S rRNA. Forms part of two intersubunit bridges in the 70S ribosome. In Acinetobacter baumannii (strain AB307-0294), this protein is Large ribosomal subunit protein uL14.